The chain runs to 607 residues: Bifunctional endo-1,4-beta-xylanase A (607 aa).

The signal sequence occupies residues 1-18; the sequence is MRTIKFFFAVAIATVAKA. Residues 35–242 form the GH11 1 domain; it reads NGQTQHKGVA…SSGIADVTKL (208 aa). Glutamate 141 acts as the Nucleophile in catalysis. Catalysis depends on glutamate 223, which acts as the Proton donor. Over residues 248–272 the composition is skewed to polar residues; it reads QKGSNPAPTSTGTVPSSSAGGSTAN. Residues 248-284 form a disordered region; it reads QKGSNPAPTSTGTVPSSSAGGSTANGKKFTVGNGQNQ. The region spanning 280–487 is the GH11 2 domain; the sequence is NGQNQHKGVN…SSGVADVTLL (208 aa). Catalysis depends on glutamate 386, which acts as the Nucleophile. Residue glutamate 474 is the Proton donor of the active site. Residues 493 to 514 are disordered; that stretch reads PKGSSPATSAAPRTTTRTTTRT. Residues 496 to 514 are compositionally biased toward low complexity; sequence SSPATSAAPRTTTRTTTRT. CBM10 domains lie at 523-563 and 566-606; these read KCSA…CGCG and QCSS…CGCG.

This sequence belongs to the glycosyl hydrolase 11 (cellulase G) family.

The catalysed reaction is Endohydrolysis of (1-&gt;4)-beta-D-xylosidic linkages in xylans.. The protein operates within glycan degradation; xylan degradation. In terms of biological role, hydrolyzes xylans into xylobiose and xylose. This chain is Bifunctional endo-1,4-beta-xylanase A (XYNA), found in Neocallimastix patriciarum (Rumen fungus).